A 712-amino-acid polypeptide reads, in one-letter code: Polyribonucleotide nucleotidyltransferase (712 aa).

Mg(2+) contacts are provided by Asp485 and Asp491. The KH domain occupies 552–611 (PRIHTMKIDPKKIKDVIGKGGAVIRSLTEETGTSIDIDDDGTVKIAATDNNAAKMVMSRI). The region spanning 621 to 689 (NAIYTGKVSR…RQNRIRLTMK (69 aa)) is the S1 motif domain.

Belongs to the polyribonucleotide nucleotidyltransferase family. Component of the RNA degradosome, which is a multiprotein complex involved in RNA processing and mRNA degradation. Mg(2+) is required as a cofactor.

It localises to the cytoplasm. It carries out the reaction RNA(n+1) + phosphate = RNA(n) + a ribonucleoside 5'-diphosphate. Functionally, involved in mRNA degradation. Catalyzes the phosphorolysis of single-stranded polyribonucleotides processively in the 3'- to 5'-direction. The protein is Polyribonucleotide nucleotidyltransferase of Haemophilus ducreyi (strain 35000HP / ATCC 700724).